Consider the following 87-residue polypeptide: Tan_10cys (87 aa).

Residues 1–21 (MNLKVLFLLAMVLVTLCLGED) form the signal peptide. Positions 22–27 (RVTDRR) are excised as a propeptide.

The protein belongs to the teretoxin C (TC) superfamily. Post-translationally, contains 5 disulfide bonds. Expressed by the venom duct.

Its subcellular location is the secreted. This chain is Tan_10cys, found in Terebra anilis (Auger snail).